Reading from the N-terminus, the 166-residue chain is Urease accessory protein UreE 2 (166 aa).

Positions 135–154 (EHGAYGGGHHHSRAGEEDFN) are disordered.

The protein belongs to the UreE family.

It localises to the cytoplasm. Functionally, involved in urease metallocenter assembly. Binds nickel. Probably functions as a nickel donor during metallocenter assembly. In Pseudomonas syringae pv. syringae (strain B728a), this protein is Urease accessory protein UreE 2.